The sequence spans 338 residues: Holliday junction branch migration complex subunit RuvB (338 aa).

The segment at 1-180 (MERLLDNKFS…FGIIERLDYY (180 aa)) is large ATPase domain (RuvB-L). Residues leucine 19, arginine 20, glycine 61, lysine 64, threonine 65, threonine 66, arginine 170, tyrosine 180, and arginine 217 each contribute to the ATP site. Threonine 65 is a Mg(2+) binding site. The interval 181 to 251 (TVEELSQIVM…VAKSGLEMFE (71 aa)) is small ATPAse domain (RuvB-S). Residues 254-338 (EYGLDLVDRN…FNVKESGDKR (85 aa)) are head domain (RuvB-H). Positions 309 and 314 each coordinate DNA.

It belongs to the RuvB family. As to quaternary structure, homohexamer. Forms an RuvA(8)-RuvB(12)-Holliday junction (HJ) complex. HJ DNA is sandwiched between 2 RuvA tetramers; dsDNA enters through RuvA and exits via RuvB. An RuvB hexamer assembles on each DNA strand where it exits the tetramer. Each RuvB hexamer is contacted by two RuvA subunits (via domain III) on 2 adjacent RuvB subunits; this complex drives branch migration. In the full resolvosome a probable DNA-RuvA(4)-RuvB(12)-RuvC(2) complex forms which resolves the HJ.

Its subcellular location is the cytoplasm. It catalyses the reaction ATP + H2O = ADP + phosphate + H(+). The RuvA-RuvB-RuvC complex processes Holliday junction (HJ) DNA during genetic recombination and DNA repair, while the RuvA-RuvB complex plays an important role in the rescue of blocked DNA replication forks via replication fork reversal (RFR). RuvA specifically binds to HJ cruciform DNA, conferring on it an open structure. The RuvB hexamer acts as an ATP-dependent pump, pulling dsDNA into and through the RuvAB complex. RuvB forms 2 homohexamers on either side of HJ DNA bound by 1 or 2 RuvA tetramers; 4 subunits per hexamer contact DNA at a time. Coordinated motions by a converter formed by DNA-disengaged RuvB subunits stimulates ATP hydrolysis and nucleotide exchange. Immobilization of the converter enables RuvB to convert the ATP-contained energy into a lever motion, pulling 2 nucleotides of DNA out of the RuvA tetramer per ATP hydrolyzed, thus driving DNA branch migration. The RuvB motors rotate together with the DNA substrate, which together with the progressing nucleotide cycle form the mechanistic basis for DNA recombination by continuous HJ branch migration. Branch migration allows RuvC to scan DNA until it finds its consensus sequence, where it cleaves and resolves cruciform DNA. In Caldicellulosiruptor saccharolyticus (strain ATCC 43494 / DSM 8903 / Tp8T 6331), this protein is Holliday junction branch migration complex subunit RuvB.